We begin with the raw amino-acid sequence, 172 residues long: Shikimate kinase (172 aa).

11–16 (GAGKST) provides a ligand contact to ATP. S15 is a binding site for Mg(2+). Substrate is bound by residues D33, R57, and G79. Residue R117 coordinates ATP. R136 contributes to the substrate binding site. R153 lines the ATP pocket.

Belongs to the shikimate kinase family. In terms of assembly, monomer. It depends on Mg(2+) as a cofactor.

The protein localises to the cytoplasm. It catalyses the reaction shikimate + ATP = 3-phosphoshikimate + ADP + H(+). It participates in metabolic intermediate biosynthesis; chorismate biosynthesis; chorismate from D-erythrose 4-phosphate and phosphoenolpyruvate: step 5/7. Functionally, catalyzes the specific phosphorylation of the 3-hydroxyl group of shikimic acid using ATP as a cosubstrate. This is Shikimate kinase from Pseudomonas paraeruginosa (strain DSM 24068 / PA7) (Pseudomonas aeruginosa (strain PA7)).